The primary structure comprises 359 residues: ATP-dependent 6-phosphofructokinase 1 (359 aa).

Residues Gly-14, 78–79 (KG), and 115–118 (GDGS) contribute to the ATP site. Mg(2+) is bound at residue Asp-116. Substrate contacts are provided by residues 139–141 (TID), Arg-176, 183–185 (MGR), Glu-236, Arg-277, and 283–286 (HIQR). Catalysis depends on Asp-141, which acts as the Proton acceptor.

This sequence belongs to the phosphofructokinase type A (PFKA) family. Mixed-substrate PFK group III subfamily. Homodimer or homotetramer. Mg(2+) serves as cofactor.

It localises to the cytoplasm. The enzyme catalyses beta-D-fructose 6-phosphate + ATP = beta-D-fructose 1,6-bisphosphate + ADP + H(+). Its pathway is carbohydrate degradation; glycolysis; D-glyceraldehyde 3-phosphate and glycerone phosphate from D-glucose: step 3/4. Catalyzes the phosphorylation of D-fructose 6-phosphate to fructose 1,6-bisphosphate by ATP, the first committing step of glycolysis. This chain is ATP-dependent 6-phosphofructokinase 1, found in Nostoc sp. (strain PCC 7120 / SAG 25.82 / UTEX 2576).